The following is a 349-amino-acid chain: MAREKRKLEHIEYALSTGQSRTHGFCDIEFVHKSLPNSSFESVTCETKIGELSLSSPIFINAMTGGGGERTLHINEQLAYVAKHHHLAMAVGSQMAALKEKREVDSYRIVRRVNPNGIVFANLGSEATVEQAKCAVDMIEANALQIHLNVIQELTMPEGDRDFKGVLKRIENIVLTSEVPVIVKEVGFGMSKETVQQLANIGVTAIDIGGQGGTNFAAVENERRNRMLSYFNDWGIQTASSIIEASSTNNTLSLIASGGIQTALDVAKAIALGAQATAFAGYFLRILMNEGMDTLIEEVELLHTDLRFIMTALGAKNILELQQVPLVVKGDTYHWLTQRGIDTMYYSQR.

6-7 (RK) is a substrate binding site. FMN is bound by residues 62-64 (AMT), S93, and N122. Q152 provides a ligand contact to substrate. Residue E153 participates in Mg(2+) binding. FMN is bound by residues K184, T214, 258–259 (GG), and 280–281 (AG).

Belongs to the IPP isomerase type 2 family. Homooctamer. Dimer of tetramers. FMN is required as a cofactor. NADPH serves as cofactor. Requires Mg(2+) as cofactor.

The protein resides in the cytoplasm. The enzyme catalyses isopentenyl diphosphate = dimethylallyl diphosphate. Involved in the biosynthesis of isoprenoids. Catalyzes the 1,3-allylic rearrangement of the homoallylic substrate isopentenyl (IPP) to its allylic isomer, dimethylallyl diphosphate (DMAPP). The sequence is that of Isopentenyl-diphosphate delta-isomerase from Bacillus cytotoxicus (strain DSM 22905 / CIP 110041 / 391-98 / NVH 391-98).